We begin with the raw amino-acid sequence, 326 residues long: Mitochondrial glycine transporter (326 aa).

Solcar repeat units lie at residues 45-134 (HPVI…SKQY), 141-225 (PTAL…TRAT), and 237-321 (LMPL…MMAK). Transmembrane regions (helical) follow at residues 51–76 (FLCGSISGTCSTLLFQPLDLLKTRLQ), 109–135 (GMSPSIVRCVPGVGIYFGTLYSSKQYF), 147–172 (VILGMGSRSVAGVCMSPITVVKTRYE), 200–223 (GLTATLLRDAPFSGLYLMFYSQTR), 241–267 (VNFSCGVFAGILASLVTQPADVIKTHM), and 296–314 (GSVPRALRRTLMAAMAWTV).

The protein belongs to the mitochondrial carrier (TC 2.A.29) family. SLC25A38 subfamily.

The protein resides in the mitochondrion inner membrane. It catalyses the reaction glycine(in) = glycine(out). Mitochondrial glycine transporter that imports glycine into the mitochondrial matrix. Plays an important role in providing glycine for the first enzymatic step in heme biosynthesis, the condensation of glycine with succinyl-CoA to produce 5-aminolevulinate (ALA) in the mitochondrial matrix. Required during erythropoiesis. In terms of biological role, plays a role as pro-apoptotic protein that induces caspase-dependent apoptosis. In Rattus norvegicus (Rat), this protein is Mitochondrial glycine transporter.